A 572-amino-acid chain; its full sequence is Proline--tRNA ligase (572 aa).

It belongs to the class-II aminoacyl-tRNA synthetase family. ProS type 1 subfamily. Homodimer.

It is found in the cytoplasm. The catalysed reaction is tRNA(Pro) + L-proline + ATP = L-prolyl-tRNA(Pro) + AMP + diphosphate. In terms of biological role, catalyzes the attachment of proline to tRNA(Pro) in a two-step reaction: proline is first activated by ATP to form Pro-AMP and then transferred to the acceptor end of tRNA(Pro). As ProRS can inadvertently accommodate and process non-cognate amino acids such as alanine and cysteine, to avoid such errors it has two additional distinct editing activities against alanine. One activity is designated as 'pretransfer' editing and involves the tRNA(Pro)-independent hydrolysis of activated Ala-AMP. The other activity is designated 'posttransfer' editing and involves deacylation of mischarged Ala-tRNA(Pro). The misacylated Cys-tRNA(Pro) is not edited by ProRS. In Escherichia fergusonii (strain ATCC 35469 / DSM 13698 / CCUG 18766 / IAM 14443 / JCM 21226 / LMG 7866 / NBRC 102419 / NCTC 12128 / CDC 0568-73), this protein is Proline--tRNA ligase.